A 316-amino-acid polypeptide reads, in one-letter code: ATP synthase gamma chain (316 aa).

It belongs to the ATPase gamma chain family. F-type ATPases have 2 components, CF(1) - the catalytic core - and CF(0) - the membrane proton channel. CF(1) has five subunits: alpha(3), beta(3), gamma(1), delta(1), epsilon(1). CF(0) has three main subunits: a, b and c.

Its subcellular location is the cellular thylakoid membrane. Its function is as follows. Produces ATP from ADP in the presence of a proton gradient across the membrane. The gamma chain is believed to be important in regulating ATPase activity and the flow of protons through the CF(0) complex. The protein is ATP synthase gamma chain of Parasynechococcus marenigrum (strain WH8102).